Reading from the N-terminus, the 347-residue chain is Transcription factor JunD (347 aa).

The interval 1-46 is disordered; it reads METPFYGDEALSGLGGGGSSSGGGGSFASPGRLFPGAPPTAAPGSM. A compositionally biased stretch (gly residues) spans 13 to 26; sequence GLGGGGSSSGGGGS. The Menin-binding motif (MBM) signature appears at 29 to 41; the sequence is SPGRLFPGAPPTA. An MAP kinase docking motif; essential for its phosphorylation motif is present at residues 48 to 57; sequence KKDALTLSLS. Positions 63-91 are disordered; the sequence is ALKPAAAPPPGPLRTDGAPGTAPPDGLLA. At serine 92 the chain carries Phosphoserine. Phosphoserine; by MAPK8 is present on serine 102. At threonine 119 the chain carries Phosphothreonine. Disordered regions lie at residues 164 to 183 and 218 to 264; these read AAAG…SELA and EPVP…IDMD. Pro residues predominate over residues 220–231; it reads VPFPPPPPPGTL. Residues serine 251, serine 255, and serine 259 each carry the phosphoserine modification. The interval 268–295 is basic motif; sequence RIKAERKRLRNRIAASKCRKRKLERISR. Residues 268-331 enclose the bZIP domain; sequence RIKAERKRLR…AQLKQKVLSH (64 aa). The leucine-zipper stretch occupies residues 296–324; it reads LEEKVKTLKSQNTELASTASLLREQVAQL.

Belongs to the bZIP family. Jun subfamily. In terms of assembly, heterodimer; binds DNA as a heterodimer. Component of an AP-1 transcription factor complex composed of JUN-FOS heterodimers. As part of the AP-1 transcription factor complex, forms heterodimers with FOS proteins, thereby binding to the AP-1 consensus sequence and stimulating transcription. Forms heterodimers with FOSB; thereby binding to the AP-1 consensus sequence. Interacts (via MBM motif) with MEN1; this interaction represses transcriptional activation. Interacts with MAPK10; this interaction is inhibited in the presence of MEN1. Phosphorylated by MAP kinases MAPK8 and MAPK10; phosphorylation is inhibited in the presence of MEN1.

Its subcellular location is the nucleus. Transcription factor binding AP-1 sites. Heterodimerizes with proteins of the FOS family to form an AP-1 transcription factor complex, thereby enhancing their DNA binding activity to an AP-1 consensus sequence 3'-TGA[GC]TCA-5' and enhancing their transcriptional activity. This chain is Transcription factor JunD (JUND), found in Bos taurus (Bovine).